The primary structure comprises 180 residues: O-acetyl-ADP-ribose deacetylase (180 aa).

The region spanning 1–175 is the Macro domain; that stretch reads MKPQIEVVVG…LYQRLLIQRG (175 aa). Residues 11 to 12, asparagine 25, 33 to 35, and 122 to 126 each bind substrate; these read DI, GVD, and STGVY. Catalysis depends on aspartate 35, which acts as the Proton acceptor.

Belongs to the MacroD-type family. YmdB subfamily. Homodimer. Interacts with RNase III.

The catalysed reaction is 3''-O-acetyl-ADP-D-ribose + H2O = ADP-D-ribose + acetate + H(+). It carries out the reaction 2''-O-acetyl-ADP-D-ribose + H2O = ADP-D-ribose + acetate + H(+). Deacetylates O-acetyl-ADP ribose to yield ADP-ribose and free acetate. Down-regulates ribonuclease 3 (RNase III) activity. Acts by interacting directly with the region of the ribonuclease that is required for dimerization/activation. The chain is O-acetyl-ADP-ribose deacetylase from Enterobacter sp. (strain 638).